The primary structure comprises 132 residues: Myelin P2 protein (132 aa).

Ser-2 carries the N-acetylserine modification. (9Z)-octadecenoate contacts are provided by residues Arg-107 and 127-129 (RIY). Hexadecanoate contacts are provided by residues Arg-107 and 127–129 (RIY).

It belongs to the calycin superfamily. Fatty-acid binding protein (FABP) family. Monomer.

It localises to the cytoplasm. Its function is as follows. May play a role in lipid transport protein in Schwann cells. May bind cholesterol. The protein is Myelin P2 protein (Pmp2) of Mus musculus (Mouse).